The sequence spans 189 residues: Peptidyl-tRNA hydrolase (189 aa).

The Proton acceptor role is filled by His19. Residues Tyr64, Asn66, and Asn112 each contribute to the tRNA site.

The protein belongs to the PTH family. Monomer.

It is found in the cytoplasm. The catalysed reaction is an N-acyl-L-alpha-aminoacyl-tRNA + H2O = an N-acyl-L-amino acid + a tRNA + H(+). Functionally, hydrolyzes ribosome-free peptidyl-tRNAs (with 1 or more amino acids incorporated), which drop off the ribosome during protein synthesis, or as a result of ribosome stalling. Catalyzes the release of premature peptidyl moieties from peptidyl-tRNA molecules trapped in stalled 50S ribosomal subunits, and thus maintains levels of free tRNAs and 50S ribosomes. This is Peptidyl-tRNA hydrolase from Gluconobacter oxydans (strain 621H) (Gluconobacter suboxydans).